Here is a 162-residue protein sequence, read N- to C-terminus: Protein NrdI (162 aa).

Belongs to the NrdI family.

Probably involved in ribonucleotide reductase function. The sequence is that of Protein NrdI from Streptococcus pyogenes serotype M3 (strain ATCC BAA-595 / MGAS315).